The primary structure comprises 316 residues: Ribosomal RNA small subunit methyltransferase H (316 aa).

Residues 37 to 39 (GGH), Asp-56, Phe-83, Asp-106, and His-113 each bind S-adenosyl-L-methionine. Positions 276 to 316 (PILPSEEETKENPASRSAKLRVLRKTKSADKKYKKENSKEE) are disordered. Positions 302-316 (KSADKKYKKENSKEE) are enriched in basic and acidic residues.

The protein belongs to the methyltransferase superfamily. RsmH family.

It is found in the cytoplasm. It catalyses the reaction cytidine(1402) in 16S rRNA + S-adenosyl-L-methionine = N(4)-methylcytidine(1402) in 16S rRNA + S-adenosyl-L-homocysteine + H(+). Its function is as follows. Specifically methylates the N4 position of cytidine in position 1402 (C1402) of 16S rRNA. This Leptospira borgpetersenii serovar Hardjo-bovis (strain L550) protein is Ribosomal RNA small subunit methyltransferase H.